The chain runs to 198 residues: Ras-like protein 2 (198 aa).

Residue G18 to S25 participates in GTP binding. The Effector region motif lies at Y40–Y48. GTP contacts are provided by residues D65–Q69 and N124–D127. Cysteine methyl ester is present on C195. C195 is lipidated: S-farnesyl cysteine. Residues I196–M198 constitute a propeptide, removed in mature form.

It belongs to the small GTPase superfamily. Ras family.

Its subcellular location is the cell membrane. The catalysed reaction is GTP + H2O = GDP + phosphate + H(+). Its activity is regulated as follows. Alternates between an inactive form bound to GDP and an active form bound to GTP. Activated by a guanine nucleotide-exchange factor (GEF) and inactivated by a GTPase-activating protein (GAP). This Mucor circinelloides f. lusitanicus (Mucor racemosus var. lusitanicus) protein is Ras-like protein 2 (RAS2).